Reading from the N-terminus, the 523-residue chain is MVGIIDEVQLFYPLGTRIKIGDNYGTVRYVGEVSGHMGSWLGIEWDDGLRGKHNGIVDGKRYFQTQTPTGGSFIRPGKVGPCATLEDAARERYLNYDSSNVDESLIREAQASLQASLFEVVGMDKIARKQSKFEQLEEVSVDQTPVNAAGYLKELTHLTTLNVSHTLIWNWEIVASIAQQLPSLTNLNLSSNRLVLPTSSQITELEPSFRQLKRINLRSCGFSDWKDVMHTALLWPNILSLGLQENSLGQLAEVDRTKIFKQLHELDLHRTNIMDFDQVTKLGNLTTLRLLNIMENGIEEIKLPDCDSQEKLNIFVSLEQLNLLHNPIWNEADAFNELDKLPQLKRLSKTPHLKSNFDEMFSKAVASIASLQFINKAEVTAEQRRGAEYDIWKKYALDWMQATQGGTDSLREFCRRHRTYPLLVKKYGSPADFVPRSQAKQSNLINVSIRHQLTGETWEKKVPRMITVQTLQGLVMKRFRLSGDVPQLCYVDALHPDLVVPLDNNAKTLDFYSVQEHDTVLVQ.

The 45-residue stretch at 31–75 folds into the CAP-Gly domain; the sequence is GEVSGHMGSWLGIEWDDGLRGKHNGIVDGKRYFQTQTPTGGSFIR. LRR repeat units lie at residues 155 to 180, 181 to 204, 209 to 232, 235 to 258, 260 to 284, 285 to 310, and 315 to 337; these read LTHL…IAQQ, LPSL…QITE, FRQL…MHTA, WPNI…DRTK, FKQL…KLGN, LTTL…DSQE, and FVSL…AFNE.

This sequence belongs to the TBCE family.

The protein resides in the cytoplasm. Tubulin-folding protein which is required for the development of the neuronal microtubule network. Essential for the development and function of neuromuscular synapses. Likely to promote microtubule formation by acting in the negative regulation of the microtubule-severing protein spas. This Drosophila melanogaster (Fruit fly) protein is Tubulin-specific chaperone E.